A 388-amino-acid polypeptide reads, in one-letter code: Mitochondrial distribution and morphology protein 12 (388 aa).

Residues 1 to 388 form the SMP-LTD domain; that stretch reads MSLDINWSLL…VFPNFHTVAL (388 aa). Disordered regions lie at residues 75–101 and 209–249; these read DDEGDFAEEEKQREKEREERDKLRNEA and PMSI…KVSS. A compositionally biased stretch (basic and acidic residues) spans 83–101; sequence EEKQREKEREERDKLRNEA. Over residues 234-243 the composition is skewed to pro residues; the sequence is PSPPAHPAGL.

The protein belongs to the MDM12 family. As to quaternary structure, component of the ER-mitochondria encounter structure (ERMES) or MDM complex, composed of MMM1, MDM10, MDM12 and MDM34. An MMM1 homodimer associates with one molecule of MDM12 on each side in a pairwise head-to-tail manner, and the SMP-LTD domains of MMM1 and MDM12 generate a continuous hydrophobic tunnel for phospholipid trafficking.

Its subcellular location is the mitochondrion outer membrane. It is found in the endoplasmic reticulum membrane. Its function is as follows. Component of the ERMES/MDM complex, which serves as a molecular tether to connect the endoplasmic reticulum (ER) and mitochondria. Components of this complex are involved in the control of mitochondrial shape and protein biogenesis, and function in nonvesicular lipid trafficking between the ER and mitochondria. MDM12 is required for the interaction of the ER-resident membrane protein MMM1 and the outer mitochondrial membrane-resident beta-barrel protein MDM10. The MDM12-MMM1 subcomplex functions in the major beta-barrel assembly pathway that is responsible for biogenesis of all mitochondrial outer membrane beta-barrel proteins, and acts in a late step after the SAM complex. The MDM10-MDM12-MMM1 subcomplex further acts in the TOM40-specific pathway after the action of the MDM12-MMM1 complex. Essential for establishing and maintaining the structure of mitochondria and maintenance of mtDNA nucleoids. In Cryptococcus neoformans var. neoformans serotype D (strain JEC21 / ATCC MYA-565) (Filobasidiella neoformans), this protein is Mitochondrial distribution and morphology protein 12.